The following is a 397-amino-acid chain: Presenilin-like protein At2g29900 (397 aa).

Residues Met1–Glu17 lie on the Cytoplasmic side of the membrane. A helical membrane pass occupies residues Leu18 to Ile38. Over Leu39–Asn76 the chain is Lumenal. A helical membrane pass occupies residues Ser77–Leu97. The Cytoplasmic segment spans residues Arg98–Tyr106. The chain crosses the membrane as a helical span at residues Met107–Ile127. Residues Asp128–Asp135 lie on the Lumenal side of the membrane. A helical membrane pass occupies residues Ser136–Met156. Residues Ser157 to Lys158 are Cytoplasmic-facing. The helical transmembrane segment at Phe159–Phe179 threads the bilayer. Residues Thr180–Trp188 are Lumenal-facing. A helical transmembrane segment spans residues Val189–Leu209. Asp198 is an active-site residue. Over Arg210–Gly305 the chain is Cytoplasmic. The helical transmembrane segment at Leu306–Val326 threads the bilayer. The active site involves Asp318. Residues Gly327–Thr336 are Lumenal-facing. Residues Val337–Val357 traverse the membrane as a helical segment. At Tyr358–Pro366 the chain is on the cytoplasmic side. The short motif at Pro363–Leu365 is the PAL element. Residues Val367–Val387 constitute an intramembrane region (helical). Residues Val388–Phe397 are Cytoplasmic-facing.

Belongs to the peptidase A22A family. As to quaternary structure, homodimer. Probable component of the gamma-secretase complex, a complex composed of a presenilin homodimer, nicastrin, APH1 and PEN2.

The protein localises to the endoplasmic reticulum membrane. It is found in the golgi apparatus membrane. In terms of biological role, probable subunit of the gamma-secretase complex, an endoprotease complex that catalyzes the intramembrane cleavage of integral membrane proteins such as Notch receptors. This is Presenilin-like protein At2g29900 from Arabidopsis thaliana (Mouse-ear cress).